Reading from the N-terminus, the 215-residue chain is Ras-related protein Rab-14 (215 aa).

A2 carries the post-translational modification N-acetylalanine. Residues G21, V22, G23, K24, S25, C26, A38, D39, C40, H42, and T43 each contribute to the GTP site. Position 25 (S25) interacts with Mg(2+). The Switch 1 signature appears at 42–47 (HTIGVE). Mg(2+) is bound by residues T43 and D66. Positions 68-77 (AGQERFRAVT) match the Switch 2 motif. Positions 69, 124, 125, 127, 155, and 156 each coordinate GTP. Residues 188–215 (SGVQHKPSAPQGGRLTSEPQPQREGCGC) are disordered. Residues C213 and C215 are each lipidated (S-geranylgeranyl cysteine). A Cysteine methyl ester modification is found at C215.

It belongs to the small GTPase superfamily. Rab family. As to quaternary structure, interacts with ZFYVE20. Interacts with KIF16B. Interacts (GTP-bound form) with RUFY1; the interaction recruits RUFY1 onto endosomal membranes. Interacts (GTP-bound form) with RAB11FIP1 (via its C-terminus); the interactions doesn't mediate RAB11FIP1 rectruitment to membranes. Interacts with RAB11FIP2. Requires Mg(2+) as cofactor.

It localises to the recycling endosome. The protein localises to the early endosome membrane. The protein resides in the golgi apparatus membrane. It is found in the golgi apparatus. Its subcellular location is the trans-Golgi network membrane. It localises to the cytoplasmic vesicle. The protein localises to the phagosome. The enzyme catalyses GTP + H2O = GDP + phosphate + H(+). With respect to regulation, regulated by guanine nucleotide exchange factors (GEFs) including DENND6A and DENND6B which promote the exchange of bound GDP for free GTP. Regulated by GTPase activating proteins (GAPs) which increase the GTP hydrolysis activity. Inhibited by GDP dissociation inhibitors (GDIs) which prevent Rab-GDP dissociation. Functionally, the small GTPases Rab are key regulators of intracellular membrane trafficking, from the formation of transport vesicles to their fusion with membranes. Rabs cycle between an inactive GDP-bound form and an active GTP-bound form that is able to recruit to membranes different set of downstream effectors directly responsible for vesicle formation, movement, tethering and fusion. Involved in membrane trafficking between the Golgi complex and endosomes during early embryonic development. Regulates the Golgi to endosome transport of FGFR-containing vesicles during early development, a key process for developing basement membrane and epiblast and primitive endoderm lineages during early postimplantation development. May act by modulating the kinesin KIF16B-cargo association to endosomes. Regulates, together with its guanine nucleotide exchange factor DENND6A, the specific endocytic transport of ADAM10, N-cadherin/CDH2 shedding and cell-cell adhesion. Mediates endosomal tethering and fusion through the interaction with RUFY1 and RAB4B. Interaction with RAB11FIP1 may function in the process of neurite formation. The chain is Ras-related protein Rab-14 (RAB14) from Sus scrofa (Pig).